A 300-amino-acid chain; its full sequence is Protein SPEAR4 (300 aa).

The span at 1-10 shows a compositional bias: polar residues; that stretch reads MCSKTSSVSY. Residues 1-45 are disordered; that stretch reads MCSKTSSVSYGNREDDDNYSSLCPKKQKHNNGGKKRVPRRGPGVA. Residues 25 to 39 show a composition bias toward basic residues; that stretch reads KKQKHNNGGKKRVPR. The SPL signature appears at 40–48; that stretch reads RGPGVAELE. Positions 294–300 match the EAR motif; it reads IDLRLKL.

Interacts with SPL and SPEAR2. Expressed in leaves.

Its function is as follows. Adapter-like transcriptional repressor recruiting TPL/TPR coepressors to inhibit TCP transcription factors. May be involved in leaf development. The protein is Protein SPEAR4 of Arabidopsis thaliana (Mouse-ear cress).